A 503-amino-acid polypeptide reads, in one-letter code: Maturase K (503 aa).

This sequence belongs to the intron maturase 2 family. MatK subfamily.

It is found in the plastid. The protein resides in the chloroplast. Usually encoded in the trnK tRNA gene intron. Probably assists in splicing its own and other chloroplast group II introns. In Vicia villosa (Hairy vetch), this protein is Maturase K.